We begin with the raw amino-acid sequence, 106 residues long: ATP-dependent Clp protease adapter protein ClpS (106 aa).

This sequence belongs to the ClpS family. As to quaternary structure, binds to the N-terminal domain of the chaperone ClpA.

Involved in the modulation of the specificity of the ClpAP-mediated ATP-dependent protein degradation. This is ATP-dependent Clp protease adapter protein ClpS from Yersinia pestis bv. Antiqua (strain Antiqua).